A 171-amino-acid polypeptide reads, in one-letter code: Neuronal vesicle trafficking-associated protein 2 (171 aa).

Residues 1-10 show a composition bias toward polar residues; sequence MVKLNSNPSE. The disordered stretch occupies residues 1-21; that stretch reads MVKLNSNPSEKGTKPPSVEDG. At 1–71 the chain is on the cytoplasmic side; that stretch reads MVKLNSNPSE…FRVPKIAEFT (71 aa). The helical; Signal-anchor for type II membrane protein transmembrane segment at 72-92 threads the bilayer; sequence VTILVSLALAFLACIVFLVVY. Topologically, residues 93–171 are lumenal; that stretch reads KAFTYDHSCP…EPKPPKTQGH (79 aa).

The protein belongs to the NSG family.

The protein localises to the membrane. It localises to the golgi apparatus. The protein resides in the trans-Golgi network membrane. Its subcellular location is the cell projection. It is found in the dendrite. The protein localises to the endosome membrane. It localises to the early endosome membrane. The protein resides in the late endosome membrane. Its subcellular location is the lysosome lumen. It is found in the cytoplasmic vesicle membrane. The protein localises to the golgi stack membrane. It localises to the endosome. The protein resides in the multivesicular body membrane. This is Neuronal vesicle trafficking-associated protein 2 from Homo sapiens (Human).